A 759-amino-acid chain; its full sequence is TIR domain-containing adapter molecule 1 (759 aa).

The segment at 1–153 (MACTGPSLSG…CGWDVLGDLG (153 aa)) is TRIF-NTD. The short motif at 84–91 (ETPEEPPD) is the TRAF6-binding element. The short motif at 207–210 (LEIS) is the pLxIS motif element. Residue Ser-210 is modified to Phosphoserine. A Glycyl lysine isopeptide (Lys-Gly) (interchain with G-Cter in ubiquitin) cross-link involves residue Lys-229. The tract at residues 241–296 (EPAPMGCQEPEEMSWPPSVEAADSPVRPSSPGPGLPEVTTDACPASPHDPPEVPEI) is disordered. Short sequence motifs (TRAF6-binding) lie at residues 248-255 (QEPEEMSW) and 299-309 (HYPVECTDVPA). The interval 340 to 426 (LSAQPRPPTP…PEPPPPELES (87 aa)) is disordered. Low complexity predominate over residues 351-365 (VPQTSPSFPSASTSP). The span at 366–376 (FPSPSTPPEAH) shows a compositional bias: pro residues. The 161-residue stretch at 430–590 (KFYNFVVLHA…QDARALREQS (161 aa)) folds into the TIR domain. The sufficient to induce apoptosis stretch occupies residues 549 to 759 (LLDEHSKIFA…APEDNTRETE (211 aa)). The disordered stretch occupies residues 642–723 (GQGSLGTPPS…PPARPQSPGL (82 aa)). The segment covering 659–705 (HQPPPLPPWLGGTPPPIFPQPPQTFPQPPPTFPQPPPTFQQPPPACP) has biased composition (pro residues).

In terms of assembly, homodimer. Found in a multi-helicase-TICAM1 complex at least composed of DHX36, DDX1, DDX21 and TICAM1; this complex exists in resting cells with or without poly(I:C) RNA ligand stimulation. Interacts (via TIR domain) with DDX21 (via C-terminus). Interacts (via TIR domain) with DHX36 (via C-terminus). Interacts with AZI2 and IRF7. Interacts with TICAM2 in TLR4 recruitment. Interaction with PIAS4 inhibits the TICAM1-induced NF-kappa-B, IRF and IFNB1 activation. Interacts with IKBKB and IKBKE. Interaction with SARM1 blocks TICAM1-dependent transcription factor activation. Interacts with TRAF3. Interacts (when phosphorylated) with IRF3; following activation and phosphorylation on the pLxIS motif by TBK1, recruits IRF3. Interacts with TBK1, TRAF6 and RIPK1 and these interactions are enhanced in the presence of WDFY1. Interacts with TRAFD1. Interacts with UBQLN1 (via UBA domain). Interacts with TLR4 in response to LPS in a WDFY1-dependent manner. Interacts with WDFY1 in response to poly(I:C). Interacts (via the TIR domain) with TLR3 in response to poly(I:C) and this interaction is enhanced in the presence of WDFY1. Interacts with TRIM56. Component of a multi-helicase-TICAM1 complex that acts as a cytoplasmic sensor of viral double-stranded RNA (dsRNA) and plays a role in the activation of a cascade of antiviral responses including the induction of pro-inflammatory cytokines. Interacts (via the TIR domain) with TLR5. Interacts with TRIM8. Interacts with TAX1BP1 and TRIM32; these interactions target TICAM1 to TAX1BP1-mediated selective autophagic degradation. Interacts with DDX50. Post-translationally, phosphorylated by TBK1. Following activation, phosphorylated by TBK1 at Ser-210 in the pLxIS motif. The phosphorylated pLxIS motif constitutes an IRF3-binding motif, leading to recruitment of the transcription factor IRF3 to induce type-I interferons and other cytokines. Polyubiquitinated at Lys-229 by TRIM38 with 'Lys-48'-linked chains, leading to proteasomal degradation. Polyubiquitinated with 'Lys-6' and 'Lys-33'-linked chains in a TRIM8-dependent manner.

The protein resides in the cytoplasmic vesicle. It localises to the autophagosome. The protein localises to the cytoplasm. Its subcellular location is the cytosol. It is found in the mitochondrion. Functionally, involved in innate immunity against invading pathogens. Adapter used by TLR3, TLR4 (through TICAM2) and TLR5 to mediate NF-kappa-B and interferon-regulatory factor (IRF) activation, and to induce apoptosis. Ligand binding to these receptors results in TRIF recruitment through its TIR domain. Distinct protein-interaction motifs allow recruitment of the effector proteins TBK1, TRAF6 and RIPK1, which in turn, lead to the activation of transcription factors IRF3 and IRF7, NF-kappa-B and FADD respectively. Phosphorylation by TBK1 on the pLxIS motif leads to recruitment and subsequent activation of the transcription factor IRF3 to induce expression of type I interferon and exert a potent immunity against invading pathogens. Component of a multi-helicase-TICAM1 complex that acts as a cytoplasmic sensor of viral double-stranded RNA (dsRNA) and plays a role in the activation of a cascade of antiviral responses including the induction of pro-inflammatory cytokines. The protein is TIR domain-containing adapter molecule 1 (TICAM1) of Bos taurus (Bovine).